We begin with the raw amino-acid sequence, 64 residues long: Small ribosomal subunit protein bS21 (64 aa).

A disordered region spans residues 39-64; sequence EKPSVKRKKKALAAKKRAVKKARKSF. Over residues 43 to 64 the composition is skewed to basic residues; it reads VKRKKKALAAKKRAVKKARKSF.

Belongs to the bacterial ribosomal protein bS21 family.

This chain is Small ribosomal subunit protein bS21 (rpsU), found in Myxococcus xanthus.